A 344-amino-acid chain; its full sequence is N-acetyl-gamma-glutamyl-phosphate reductase (344 aa).

Residue cysteine 149 is part of the active site.

The protein belongs to the NAGSA dehydrogenase family. Type 1 subfamily.

The protein localises to the cytoplasm. It carries out the reaction N-acetyl-L-glutamate 5-semialdehyde + phosphate + NADP(+) = N-acetyl-L-glutamyl 5-phosphate + NADPH + H(+). Its pathway is amino-acid biosynthesis; L-arginine biosynthesis; N(2)-acetyl-L-ornithine from L-glutamate: step 3/4. Functionally, catalyzes the NADPH-dependent reduction of N-acetyl-5-glutamyl phosphate to yield N-acetyl-L-glutamate 5-semialdehyde. This Shouchella clausii (strain KSM-K16) (Alkalihalobacillus clausii) protein is N-acetyl-gamma-glutamyl-phosphate reductase.